Here is a 251-residue protein sequence, read N- to C-terminus: Pyridoxine 5'-phosphate synthase (251 aa).

Asparagine 7 lines the 3-amino-2-oxopropyl phosphate pocket. 9–10 serves as a coordination point for 1-deoxy-D-xylulose 5-phosphate; that stretch reads DH. Arginine 18 lines the 3-amino-2-oxopropyl phosphate pocket. Histidine 43 (proton acceptor) is an active-site residue. 1-deoxy-D-xylulose 5-phosphate is bound by residues arginine 45 and histidine 50. The Proton acceptor role is filled by glutamate 70. Threonine 100 is a 1-deoxy-D-xylulose 5-phosphate binding site. Histidine 198 functions as the Proton donor in the catalytic mechanism. 3-amino-2-oxopropyl phosphate-binding positions include alanine 199 and 220 to 221; that span reads GH.

Belongs to the PNP synthase family. In terms of assembly, homooctamer; tetramer of dimers.

It is found in the cytoplasm. The enzyme catalyses 3-amino-2-oxopropyl phosphate + 1-deoxy-D-xylulose 5-phosphate = pyridoxine 5'-phosphate + phosphate + 2 H2O + H(+). It functions in the pathway cofactor biosynthesis; pyridoxine 5'-phosphate biosynthesis; pyridoxine 5'-phosphate from D-erythrose 4-phosphate: step 5/5. In terms of biological role, catalyzes the complicated ring closure reaction between the two acyclic compounds 1-deoxy-D-xylulose-5-phosphate (DXP) and 3-amino-2-oxopropyl phosphate (1-amino-acetone-3-phosphate or AAP) to form pyridoxine 5'-phosphate (PNP) and inorganic phosphate. The polypeptide is Pyridoxine 5'-phosphate synthase (Dechloromonas aromatica (strain RCB)).